The following is a 145-amino-acid chain: 3-hydroxyacyl-[acyl-carrier-protein] dehydratase FabZ (145 aa).

H48 is a catalytic residue.

It belongs to the thioester dehydratase family. FabZ subfamily.

The protein resides in the cytoplasm. It catalyses the reaction a (3R)-hydroxyacyl-[ACP] = a (2E)-enoyl-[ACP] + H2O. Its function is as follows. Involved in unsaturated fatty acids biosynthesis. Catalyzes the dehydration of short chain beta-hydroxyacyl-ACPs and long chain saturated and unsaturated beta-hydroxyacyl-ACPs. The polypeptide is 3-hydroxyacyl-[acyl-carrier-protein] dehydratase FabZ (Geobacillus sp. (strain WCH70)).